The following is a 185-amino-acid chain: Ribosome-recycling factor (185 aa).

The segment at Asp137–Asp162 is disordered.

It belongs to the RRF family.

It is found in the cytoplasm. Responsible for the release of ribosomes from messenger RNA at the termination of protein biosynthesis. May increase the efficiency of translation by recycling ribosomes from one round of translation to another. The protein is Ribosome-recycling factor of Streptomyces coelicolor (strain ATCC BAA-471 / A3(2) / M145).